Consider the following 120-residue polypeptide: NAD(P)H-quinone oxidoreductase subunit 3, chloroplastic (120 aa).

Transmembrane regions (helical) follow at residues 9 to 29, 64 to 84, and 88 to 108; these read IFWA…LISG, MFAL…PWAM, and VLGV…IVGS.

The protein belongs to the complex I subunit 3 family. As to quaternary structure, NDH is composed of at least 16 different subunits, 5 of which are encoded in the nucleus.

Its subcellular location is the plastid. The protein resides in the chloroplast thylakoid membrane. The enzyme catalyses a plastoquinone + NADH + (n+1) H(+)(in) = a plastoquinol + NAD(+) + n H(+)(out). It carries out the reaction a plastoquinone + NADPH + (n+1) H(+)(in) = a plastoquinol + NADP(+) + n H(+)(out). NDH shuttles electrons from NAD(P)H:plastoquinone, via FMN and iron-sulfur (Fe-S) centers, to quinones in the photosynthetic chain and possibly in a chloroplast respiratory chain. The immediate electron acceptor for the enzyme in this species is believed to be plastoquinone. Couples the redox reaction to proton translocation, and thus conserves the redox energy in a proton gradient. This is NAD(P)H-quinone oxidoreductase subunit 3, chloroplastic from Calycanthus floridus var. glaucus (Eastern sweetshrub).